The sequence spans 260 residues: GDNF family receptor alpha-4 (260 aa).

The first 23 residues, 1–23 (MAHCMESALLLLLLLGSASFTDG), serve as a signal peptide directing secretion. Residue asparagine 184 is glycosylated (N-linked (GlcNAc...) asparagine). A lipid anchor (GPI-anchor amidated threonine) is attached at threonine 237. The propeptide at 238 to 260 (AGCCFPRVSWLYALTALALQALL) is removed in mature form.

This sequence belongs to the GDNFR family. In terms of assembly, interacts with ARTN ligand and RET: forms a 2:2:2 ternary complex composed of ARTN ligand, GFRA3 and RET receptor. Interacts with SORL1. Expressed in many tissues including adrenal medulla, brain neurons, with highest levels in the cerebral cortex and hippocampus. Moderate levels found in the gut circular muscle and myenteric ganglia as well as in other peripheral ganglia, including the sensory dorsal root and trigeminal as well as superior cervical and sympathetic chain ganglia. Isoform a1, isoform a2, isoform b1 and isoform b2 are exclusively found in the thyroid, parthyroid and pituitary glands.

The protein resides in the cell membrane. Its subcellular location is the secreted. Receptor for persephin (PSPN), a growth factor that exhibits neurotrophic activity on mesencephalic dopaminergic and motor neurons. Acts by binding to its coreceptor, GFRA4, leading to autophosphorylation and activation of the RET receptor. May be important in C-cell development and, in the postnatal development of the adrenal medulla. The protein is GDNF family receptor alpha-4 (Gfra4) of Mus musculus (Mouse).